A 90-amino-acid chain; its full sequence is U7-theraphotoxin-Hhn1l (90 aa).

The N-terminal stretch at 1–19 (MKTAIFTVVLALAVFAVLS) is a signal peptide. Residues 20 to 50 (FGWEANEKALSEEFTELIHEKEAASETEARE) constitute a propeptide that is removed on maturation. 3 disulfides stabilise this stretch: Cys-51-Cys-65, Cys-58-Cys-70, and Cys-64-Cys-81.

The protein belongs to the neurotoxin 10 (Hwtx-1) family. 13 (Hntx-13) subfamily. Expressed by the venom gland.

The protein localises to the secreted. Functionally, ion channel inhibitor. This is U7-theraphotoxin-Hhn1l from Cyriopagopus hainanus (Chinese bird spider).